The chain runs to 258 residues: Shikimate dehydrogenase (NADP(+)) (258 aa).

Shikimate-binding positions include 14 to 16 (SES) and T61. The active-site Proton acceptor is the K65. Shikimate is bound by residues N86 and D101. NADP(+)-binding positions include 125–129 (GSGGS) and L211. Y213 lines the shikimate pocket. NADP(+) is bound at residue G234.

Belongs to the shikimate dehydrogenase family. In terms of assembly, homodimer.

It carries out the reaction shikimate + NADP(+) = 3-dehydroshikimate + NADPH + H(+). It functions in the pathway metabolic intermediate biosynthesis; chorismate biosynthesis; chorismate from D-erythrose 4-phosphate and phosphoenolpyruvate: step 4/7. Its function is as follows. Involved in the biosynthesis of the chorismate, which leads to the biosynthesis of aromatic amino acids. Catalyzes the reversible NADPH linked reduction of 3-dehydroshikimate (DHSA) to yield shikimate (SA). This Clostridium botulinum (strain ATCC 19397 / Type A) protein is Shikimate dehydrogenase (NADP(+)).